Reading from the N-terminus, the 598-residue chain is MDSHVGEVDIFQQCKYIHEVELVNMKLQMRILETHIETKDRLLRNLEDIIDEQESRIANMEDFIQGRATSYTNRSNMLKGISVLSLDFGNLSEENLRLKNALSQMQKVARVNELLETDEDYESDMTSNEDRFALSRDSSCSVPRSVSPQPTGDVIKPYPQMVQSMREEGHWKKLQRCAEELKTEKDELKRLALDTKDAFNVCMAEMRMMLTSKTTDFFRVLIERYKAEMEKRKQLHNQLVELNGNIRVFYRIRPQLASETDNQKPVVVIDEMDNGVVHVSNTTGTRKTSAGADKVIPTDFSQDQIFNEVSPIITSCIDGYNVCIFAYGHTGSGKTYTMDGPVTMPGINQRAIMQLFETAKERTGDIKYDIKVAMMEIYNEKIRDLLNTSNTNLAIRQTEEGRSSIPGLEEVSVNSAEEVTETLARGRKNKAVAATEANIESSRSHVIVRVLVSATNLITKATTVGRLNLVDLAGSERVSQTNATGQLLKEAQAINKSLSELGNVVLALRQNQKHIPFRNCQLTRILEDSLNGDSKTLVIVHLSPDAKSLNESISSVNFAEKIGQVFTKSGTMKREPTRRSMTGISSGQRREIPASPRK.

Coiled-coil stretches lie at residues 19–66 and 89–118; these read EVEL…FIQG and GNLS…LETD. Residues 133-155 form a disordered region; that stretch reads ALSRDSSCSVPRSVSPQPTGDVI. Positions 136-150 are enriched in polar residues; sequence RDSSCSVPRSVSPQP. Residues 170–248 adopt a coiled-coil conformation; it reads HWKKLQRCAE…LVELNGNIRV (79 aa). One can recognise a Kinesin motor domain in the interval 245–565; sequence NIRVFYRIRP…VNFAEKIGQV (321 aa). ATP is bound at residue 328–335; sequence GHTGSGKT. The interval 569-598 is disordered; the sequence is SGTMKREPTRRSMTGISSGQRREIPASPRK.

The protein belongs to the TRAFAC class myosin-kinesin ATPase superfamily. Kinesin family.

The protein resides in the cytoplasm. The protein localises to the cytoskeleton. The sequence is that of Kinesin-like protein klp-3 (klp-3) from Caenorhabditis elegans.